The sequence spans 318 residues: MSAILFPGQGVDWKTWMQPYLENNIVQNTLKEAENVTEIEIRKYIVEAEAKSNLRQPITTIAQPAILACSIALLRAFPPFTKKFRFYVGHSLGEYSAFVASQTLSFSSALKLVQARAKAMSYASALCQNPTSMLAITLTSRFPTDNFLNTVYSAVQKYRLIDIANVNSDRQIVLSGDKKELESITSTLSELVRSLGKLRSNWLDVSGAFHSRYMLPARDSLKNALGETEFNISPELCYTDSGKRFLPIISNVTAELYPADEEDIRRQLLLQCFRPVLFKNCLKTVKSKYGANLFYAYGPGTTMQSIAKQNGISTKSRP.

This sequence belongs to the FabD family.

It is found in the mitochondrion. The enzyme catalyses holo-[ACP] + malonyl-CoA = malonyl-[ACP] + CoA. It participates in lipid metabolism; fatty acid biosynthesis. Functionally, involved in biosynthesis of fatty acids in mitochondria. The chain is Malonyl CoA-acyl carrier protein transacylase, mitochondrial (mct1) from Schizosaccharomyces pombe (strain 972 / ATCC 24843) (Fission yeast).